Here is a 626-residue protein sequence, read N- to C-terminus: Basic helix-loop-helix ARNT-like protein 1 (626 aa).

The segment at M1 to R60 is disordered. S17 carries the phosphoserine; by GSK3-beta modification. The segment covering S17–G32 has biased composition (low complexity). The residue at position 21 (T21) is a Phosphothreonine; by GSK3-beta. Positions N36–G41 match the Nuclear localization signal motif. Residues D51–R60 are compositionally biased toward basic and acidic residues. The bHLH domain maps to N72–L125. At S78 the chain carries Phosphoserine. A Phosphoserine; by CK2 modification is found at S90. The Nuclear export signal 1 motif lies at L142 to L152. In terms of domain architecture, PAS 1 spans S143–P215. K252 is covalently cross-linked (Glycyl lysine isopeptide (Lys-Gly) (interchain with G-Cter in SUMO2 and SUMO3)). Residue K259 forms a Glycyl lysine isopeptide (Lys-Gly) (interchain with G-Cter in SUMO); alternate linkage. K259 is covalently cross-linked (Glycyl lysine isopeptide (Lys-Gly) (interchain with G-Cter in SUMO2); alternate). The 71-residue stretch at P326–R396 folds into the PAS 2 domain. A Nuclear export signal 2 motif is present at residues L361–L369. Residues N402 to V445 form the PAC domain. 2 disordered regions span residues A458–G493 and G511–D596. Residues I484–G493 are compositionally biased toward gly residues. Residues R508–Q588 are interaction with CIART. The span at G511–P521 shows a compositional bias: low complexity. Position 538 is an N6-acetyllysine (K538).

As to quaternary structure, component of the circadian clock oscillator which includes the CRY1/2 proteins, CLOCK or NPAS2, BMAL1 or BMAL2, CSNK1D and/or CSNK1E, TIMELESS and the PER1/2/3 proteins. Forms a heterodimer with CLOCK. The CLOCK-BMAL1 heterodimer is required for E-box-dependent transactivation, for CLOCK nuclear translocation and degradation, and, for phosphorylation of both CLOCK and BMAL1. Part of a nuclear complex which also includes RACK1 and PRKCA; RACK1 and PRKCA are recruited to the complex in a circadian manner. Interacts with NPAS2. Interacts with EZH2. Interacts with SUMO3. Interacts with SIRT1. Interacts with AHR. Interacts with ID1, ID2 and ID3. Interacts with DDX4. Interacts with OGT. Interacts with EED and SUZ12. Interacts with MTA1. Interacts with CIART. Interacts with HSP90. Interacts with KAT2B and EP300. Interacts with BHLHE40/DEC1 and BHLHE41/DEC2. Interacts with RELB and the interaction is enhanced in the presence of CLOCK. Interacts with PER1, PER2, CRY1 and CRY2 and this interaction requires a translocation to the nucleus. Interaction of the CLOCK-BMAL1 heterodimer with PER or CRY inhibits transcription activation. Interaction of the CLOCK-BMAL1 with CRY1 is independent of DNA but with PER2 is off DNA. The CLOCK-BMAL1 heterodimer interacts with GSK3B. Interacts with KDM5A. Interacts with KMT2A; in a circadian manner. Interacts with UBE3A. Interacts with PRKCG. Interacts with MAGEL2. Interacts with NCOA2. Interacts with THRAP3. The CLOCK-BMAL1 heterodimer interacts with PASD1. Interacts with PASD1. Interacts with USP9X. Interacts with PIWIL2 (via PIWI domain). Interacts with HDAC3. Interacts with HNF4A. Post-translationally, ubiquitinated, leading to its proteasomal degradation. Deubiquitinated by USP9X. In terms of processing, O-glycosylated; contains O-GlcNAc. O-glycosylation by OGT prevents protein degradation by inhibiting ubiquitination. It also stabilizes the CLOCK-BMAL1 heterodimer thereby increasing CLOCK-BMAL1-mediated transcription of genes in the negative loop of the circadian clock such as PER1/2/3 and CRY1/2. Acetylated on Lys-538 by CLOCK during the repression phase of the circadian cycle. Acetylation facilitates recruitment of CRY1 protein and initiates the repression phase of the circadian cycle. Acetylated at Lys-538 by KAT5 during the activation phase of the cycle, leading to recruitment of the positive transcription elongation factor b (P-TEFb) and BRD4, followed by productive elongation of circadian transcripts. Deacetylated by SIRT1, which may result in decreased protein stability. Post-translationally, phosphorylated upon dimerization with CLOCK. Phosphorylation enhances the transcriptional activity, alters the subcellular localization and decreases the stability of the CLOCK-BMAL1 heterodimer by promoting its degradation. Phosphorylation shows circadian variations in the liver with a peak between CT10 to CT14. Phosphorylation at Ser-90 by CK2 is essential for its nuclear localization, its interaction with CLOCK and controls CLOCK nuclear entry. Dephosphorylation at Ser-78 is important for dimerization with CLOCK and transcriptional activity. In terms of processing, sumoylated on Lys-259 upon dimerization with CLOCK. Predominantly conjugated to poly-SUMO2/3 rather than SUMO1 and the level of these conjugates undergo rhythmic variation, peaking at CT9-CT12. Sumoylation localizes it exclusively to the PML body and promotes its ubiquitination in the PML body, ubiquitin-dependent proteasomal degradation and the transcriptional activity of the CLOCK-BMAL1 heterodimer. Undergoes lysosome-mediated degradation in a time-dependent manner in the liver. As to expression, highly expressed in the suprachiasmatic nucleus (SCN). Also expressed in all other tissues examined including kidney, intestine, liver, heart, spleen, brain, muscle, lung, harderian gland and eye. Low expression in kidney and spleen.

Its subcellular location is the nucleus. The protein resides in the cytoplasm. The protein localises to the PML body. Transcriptional activator which forms a core component of the circadian clock. The circadian clock, an internal time-keeping system, regulates various physiological processes through the generation of approximately 24 hour circadian rhythms in gene expression, which are translated into rhythms in metabolism and behavior. It is derived from the Latin roots 'circa' (about) and 'diem' (day) and acts as an important regulator of a wide array of physiological functions including metabolism, sleep, body temperature, blood pressure, endocrine, immune, cardiovascular, and renal function. Consists of two major components: the central clock, residing in the suprachiasmatic nucleus (SCN) of the brain, and the peripheral clocks that are present in nearly every tissue and organ system. Both the central and peripheral clocks can be reset by environmental cues, also known as Zeitgebers (German for 'timegivers'). The predominant Zeitgeber for the central clock is light, which is sensed by retina and signals directly to the SCN. The central clock entrains the peripheral clocks through neuronal and hormonal signals, body temperature and feeding-related cues, aligning all clocks with the external light/dark cycle. Circadian rhythms allow an organism to achieve temporal homeostasis with its environment at the molecular level by regulating gene expression to create a peak of protein expression once every 24 hours to control when a particular physiological process is most active with respect to the solar day. Transcription and translation of core clock components (CLOCK, NPAS2, BMAL1, BMAL2, PER1, PER2, PER3, CRY1 and CRY2) plays a critical role in rhythm generation, whereas delays imposed by post-translational modifications (PTMs) are important for determining the period (tau) of the rhythms (tau refers to the period of a rhythm and is the length, in time, of one complete cycle). A diurnal rhythm is synchronized with the day/night cycle, while the ultradian and infradian rhythms have a period shorter and longer than 24 hours, respectively. Disruptions in the circadian rhythms contribute to the pathology of cardiovascular diseases, cancer, metabolic syndromes and aging. A transcription/translation feedback loop (TTFL) forms the core of the molecular circadian clock mechanism. Transcription factors, CLOCK or NPAS2 and BMAL1 or BMAL2, form the positive limb of the feedback loop, act in the form of a heterodimer and activate the transcription of core clock genes and clock-controlled genes (involved in key metabolic processes), harboring E-box elements (5'-CACGTG-3') within their promoters. The core clock genes: PER1/2/3 and CRY1/2 which are transcriptional repressors form the negative limb of the feedback loop and interact with the CLOCK|NPAS2-BMAL1|BMAL2 heterodimer inhibiting its activity and thereby negatively regulating their own expression. This heterodimer also activates nuclear receptors NR1D1/2 and RORA/B/G, which form a second feedback loop and which activate and repress BMAL1 transcription, respectively. BMAL1 positively regulates myogenesis and negatively regulates adipogenesis via the transcriptional control of the genes of the canonical Wnt signaling pathway. Plays a role in normal pancreatic beta-cell function; regulates glucose-stimulated insulin secretion via the regulation of antioxidant genes NFE2L2/NRF2 and its targets SESN2, PRDX3, CCLC and CCLM. Negatively regulates the mTORC1 signaling pathway; regulates the expression of MTOR and DEPTOR. Controls diurnal oscillations of Ly6C inflammatory monocytes; rhythmic recruitment of the PRC2 complex imparts diurnal variation to chemokine expression that is necessary to sustain Ly6C monocyte rhythms. Regulates the expression of HSD3B2, STAR, PTGS2, CYP11A1, CYP19A1 and LHCGR in the ovary and also the genes involved in hair growth. Plays an important role in adult hippocampal neurogenesis by regulating the timely entry of neural stem/progenitor cells (NSPCs) into the cell cycle and the number of cell divisions that take place prior to cell-cycle exit. Regulates the circadian expression of CIART and KLF11. The CLOCK-BMAL1 heterodimer regulates the circadian expression of SERPINE1/PAI1, VWF, B3, CCRN4L/NOC, NAMPT, DBP, MYOD1, PPARGC1A, PPARGC1B, SIRT1, GYS2, F7, NGFR, GNRHR, BHLHE40/DEC1, ATF4, MTA1, KLF10 and also genes implicated in glucose and lipid metabolism. Promotes rhythmic chromatin opening, regulating the DNA accessibility of other transcription factors. The NPAS2-BMAL1 heterodimer positively regulates the expression of MAOA, F7 and LDHA and modulates the circadian rhythm of daytime contrast sensitivity by regulating the rhythmic expression of adenylate cyclase type 1 (ADCY1) in the retina. The preferred binding motif for the CLOCK-BMAL1 heterodimer is 5'-CACGTGA-3', which contains a flanking adenine nucleotide at the 3-prime end of the canonical 6-nucleotide E-box sequence. CLOCK specifically binds to the half-site 5'-CAC-3', while BMAL1 binds to the half-site 5'-GTGA-3'. The CLOCK-BMAL1 heterodimer also recognizes the non-canonical E-box motifs 5'-AACGTGA-3' and 5'-CATGTGA-3'. Essential for the rhythmic interaction of CLOCK with ASS1 and plays a critical role in positively regulating CLOCK-mediated acetylation of ASS1. Plays a role in protecting against lethal sepsis by limiting the expression of immune checkpoint protein CD274 in macrophages in a PKM2-dependent manner. Regulates the diurnal rhythms of skeletal muscle metabolism via transcriptional activation of genes promoting triglyceride synthesis (DGAT2) and metabolic efficiency (COQ10B). The sequence is that of Basic helix-loop-helix ARNT-like protein 1 (Bmal1) from Nannospalax galili (Northern Israeli blind subterranean mole rat).